The chain runs to 66 residues: Kappa-flavitoxin (66 aa).

Cystine bridges form between cysteine 3/cysteine 21, cysteine 14/cysteine 42, cysteine 27/cysteine 31, cysteine 46/cysteine 58, and cysteine 59/cysteine 64.

Belongs to the three-finger toxin family. Long-chain subfamily. Kappa-neurotoxin sub-subfamily. As to quaternary structure, homo- and heterodimer; non-covalently linked. In terms of tissue distribution, expressed by the venom gland.

It localises to the secreted. Postsynaptic neurotoxin that binds and inhibits neuronal nicotinic acetylcholine receptors (nAChR) with high affinity (IC(50)&lt;100 nM). Is a selective, and slowly reversible antagonist of alpha-3/CHRNA3-containing and some alpha-4/CHRNA4-containing AChRs. The polypeptide is Kappa-flavitoxin (Bungarus flaviceps flaviceps (Red-headed krait)).